Consider the following 519-residue polypeptide: Sugar transport protein MST5 (519 aa).

Residues 1-18 (MAGGAMVQTVGGKTYPGK) lie on the Cytoplasmic side of the membrane. The helical transmembrane segment at 19-39 (MTAFVFFTCLVASSGGLIFGY) threads the bilayer. Residues 40–80 (DIGISGGVTSMDSFLSEFFPSVYAQAKASKDTNQYCKFDSQ) lie on the Extracellular side of the membrane. A helical membrane pass occupies residues 81–101 (LLTLFTSSLYLAALATSFVAA). Residues 102 to 110 (WVTRVFGRK) lie on the Cytoplasmic side of the membrane. The helical transmembrane segment at 111 to 127 (WSMFCGGVTFLAGSALN) threads the bilayer. Position 128 (glycine 128) is a topological domain, extracellular. Residues 129 to 149 (AATDVMMLILGRILLGIGVGF) form a helical membrane-spanning segment. Residues 150 to 167 (ANQSVPLYLSEMAPANLR) lie on the Cytoplasmic side of the membrane. The helical transmembrane segment at 168-188 (GMLNIGFQLMTTIGILSANLI) threads the bilayer. Over 189–202 (NYATSSIEGGWGWR) the chain is Extracellular. Residues 203 to 223 (IGLGLAGVPALIITLGALVLP) traverse the membrane as a helical segment. The Cytoplasmic portion of the chain corresponds to 224–295 (DTPNSLIARG…IAILIPCFQQ (72 aa)). The helical transmembrane segment at 296–316 (LTGINVIMFYAPVLFLTIGFA) threads the bilayer. At 317–321 (GDASL) the chain is on the extracellular side. A helical membrane pass occupies residues 322-342 (MSAVITGLVNMFATVVSIISV). At 343–357 (DRLGRRVLFLQGGTQ) the chain is on the cytoplasmic side. Residues 358–378 (MFISQVVVGTLIALQFGVAGV) traverse the membrane as a helical segment. Residues 379–386 (GEMSRSYA) lie on the Extracellular side of the membrane. A helical transmembrane segment spans residues 387-407 (ILLVLFICMYVAGFAWSWGPL). Residues 408 to 426 (GWLVPSEVFALEIRSAGQS) are Cytoplasmic-facing. Residues 427-447 (IAVCVNMMLTFVIGQAFLTML) traverse the membrane as a helical segment. Residues 448-451 (CHLK) are Extracellular-facing. A helical transmembrane segment spans residues 452–472 (FGLFYFFAGWMLVMTTFVALF). Topologically, residues 473–519 (LPETKGVPIEEMNHVWSRHWFWGSYVTAHDVAGAGAGGGGNRRSHNV) are cytoplasmic.

Belongs to the major facilitator superfamily. Sugar transporter (TC 2.A.1.1) family. Expressed in panicles before heading. Expressed in flowers before pollination.

It localises to the membrane. In terms of biological role, mediates active uptake of hexoses by sugar:proton symport. Can transport glucose, xylose and 3-O-methylglucose. May play a role at the early stage of seed development. The polypeptide is Sugar transport protein MST5 (Oryza sativa subsp. japonica (Rice)).